The following is a 106-amino-acid chain: SH3 domain-binding glutamic acid-rich-like protein 2-B (106 aa).

The SH3-binding motif lies at 61–67; it reads QGNPLPP.

Belongs to the SH3BGR family.

It is found in the nucleus. This chain is SH3 domain-binding glutamic acid-rich-like protein 2-B (sh3bgrl2-b), found in Xenopus laevis (African clawed frog).